The sequence spans 561 residues: Dihydroxy-acid dehydratase 2 (561 aa).

Cysteine 53 is a binding site for [2Fe-2S] cluster. Aspartate 85 lines the Mg(2+) pocket. Cysteine 126 contributes to the [2Fe-2S] cluster binding site. Mg(2+) is bound by residues aspartate 127 and lysine 128. N6-carboxylysine is present on lysine 128. Cysteine 195 is a [2Fe-2S] cluster binding site. Glutamate 446 lines the Mg(2+) pocket. The active-site Proton acceptor is the serine 472.

This sequence belongs to the IlvD/Edd family. As to quaternary structure, homodimer. [2Fe-2S] cluster serves as cofactor. It depends on Mg(2+) as a cofactor.

The catalysed reaction is (2R)-2,3-dihydroxy-3-methylbutanoate = 3-methyl-2-oxobutanoate + H2O. The enzyme catalyses (2R,3R)-2,3-dihydroxy-3-methylpentanoate = (S)-3-methyl-2-oxopentanoate + H2O. It participates in amino-acid biosynthesis; L-isoleucine biosynthesis; L-isoleucine from 2-oxobutanoate: step 3/4. The protein operates within amino-acid biosynthesis; L-valine biosynthesis; L-valine from pyruvate: step 3/4. Its function is as follows. Functions in the biosynthesis of branched-chain amino acids. Catalyzes the dehydration of (2R,3R)-2,3-dihydroxy-3-methylpentanoate (2,3-dihydroxy-3-methylvalerate) into 2-oxo-3-methylpentanoate (2-oxo-3-methylvalerate) and of (2R)-2,3-dihydroxy-3-methylbutanoate (2,3-dihydroxyisovalerate) into 2-oxo-3-methylbutanoate (2-oxoisovalerate), the penultimate precursor to L-isoleucine and L-valine, respectively. The polypeptide is Dihydroxy-acid dehydratase 2 (Acinetobacter baylyi (strain ATCC 33305 / BD413 / ADP1)).